The following is a 434-amino-acid chain: Sodium/bile acid cotransporter 5 (434 aa).

The signal sequence occupies residues 1-18; sequence MSGKLFIILLLLVTPGEA. Topologically, residues 19–129 are extracellular; that stretch reads RKSFLRFLNI…VSVFRQTEDS (111 aa). N-linked (GlcNAc...) asparagine glycans are attached at residues Asn73 and Asn96. The helical transmembrane segment at 130 to 150 threads the bilayer; sequence LFQEPIHVNSSVFLLVLLMIL. Residues 151–172 lie on the Cytoplasmic side of the membrane; that stretch reads LNKCAFGCKIELQVLQTVWKRP. Residues 173–193 traverse the membrane as a helical segment; sequence LPILLGAVTQFFLMPFCGFLL. Residues 194–195 lie on the Extracellular side of the membrane; that stretch reads SQ. The helical transmembrane segment at 196 to 216 threads the bilayer; sequence ILGLSKAQAFGFVMTCTCPGG. Residues 217–232 are Cytoplasmic-facing; sequence GGGYLFALLLEGDVTL. The helical transmembrane segment at 233–255 threads the bilayer; the sequence is AILMACTSTSLALIMMPVNSYLY. The Extracellular segment spans residues 256–268; sequence SCLLGLAGVFHVP. The chain crosses the membrane as a helical span at residues 269 to 289; sequence VLKIVSTLLFILTPVSIGIVI. Topologically, residues 290 to 306 are cytoplasmic; the sequence is KHRMPKKAVCLERVVQP. The chain crosses the membrane as a helical span at residues 307–327; the sequence is LSLTLMLVGVYLAFRMGLVFL. The Extracellular segment spans residues 328–331; it reads RMAN. Residues 332 to 352 traverse the membrane as a helical segment; it reads LEVFLLGLLVPVLGFSFGYSF. The Cytoplasmic portion of the chain corresponds to 353–365; sequence AKVYLLPLPVCKT. Residues 366–386 form a helical membrane-spanning segment; that stretch reads VAIESGMLNSFLALAIIQLSF. Topologically, residues 387–395 are extracellular; sequence PQSKAYEAS. Residues 396–416 traverse the membrane as a helical segment; that stretch reads VAPFTVAMCSSCEMLLLLLVY. The Cytoplasmic segment spans residues 417-434; the sequence is KAKKRPLLSTENEKAPLV.

This sequence belongs to the bile acid:sodium symporter (BASS) (TC 2.A.28) family.

The protein resides in the membrane. This chain is Sodium/bile acid cotransporter 5 (Slc10a5), found in Rattus norvegicus (Rat).